The sequence spans 237 residues: tRNA (guanine-N(7)-)-methyltransferase (237 aa).

Positions 68, 93, 120, and 143 each coordinate S-adenosyl-L-methionine. D143 is an active-site residue. Substrate-binding positions include K147, D179, and 216-219 (TKFE).

This sequence belongs to the class I-like SAM-binding methyltransferase superfamily. TrmB family.

The enzyme catalyses guanosine(46) in tRNA + S-adenosyl-L-methionine = N(7)-methylguanosine(46) in tRNA + S-adenosyl-L-homocysteine. The protein operates within tRNA modification; N(7)-methylguanine-tRNA biosynthesis. Catalyzes the formation of N(7)-methylguanine at position 46 (m7G46) in tRNA. This Shewanella halifaxensis (strain HAW-EB4) protein is tRNA (guanine-N(7)-)-methyltransferase.